A 493-amino-acid chain; its full sequence is 6-aminohexanoate-cyclic-dimer hydrolase (493 aa).

Residues Lys72 and Ser150 each act as charge relay system in the active site. The Acyl-ester intermediate role is filled by Ser174.

Belongs to the amidase family. Homodimer.

The enzyme catalyses 1,8-diazacyclotetradecane-2,9-dione + H2O = N-(6-aminohexanoyl)-6-aminohexanoate. Its pathway is xenobiotic degradation; nylon-6 oligomer degradation. Its function is as follows. Catalyzes the hydrolysis of 6-aminohexanoic acid cyclic dimer (1,8-diazacyclotetradecane-2,9-dione) to form the linear dimer 6-aminohexanoyl-6-aminohexanoic acid. This chain is 6-aminohexanoate-cyclic-dimer hydrolase (nylA), found in Pseudomonas sp. (strain NK87).